A 372-amino-acid chain; its full sequence is NAD(P)H-quinone oxidoreductase subunit 1 (372 aa).

The next 9 helical transmembrane spans lie at 27 to 47, 65 to 85, 97 to 117, 128 to 148, 176 to 196, 204 to 224, 249 to 269, 308 to 328, and 351 to 371; these read TIWL…GVLV, PEYI…KLVF, WLFT…YLIV, LGIG…GLLM, LALA…IDIV, ILGW…IAAL, YAGM…VLSS, GLGL…AILL, and VGLV…FAFG.

The protein belongs to the complex I subunit 1 family. As to quaternary structure, NDH-1 is composed of at least 11 different subunits.

The protein localises to the cellular thylakoid membrane. The catalysed reaction is a plastoquinone + NADH + (n+1) H(+)(in) = a plastoquinol + NAD(+) + n H(+)(out). It carries out the reaction a plastoquinone + NADPH + (n+1) H(+)(in) = a plastoquinol + NADP(+) + n H(+)(out). Functionally, NDH-1 shuttles electrons from an unknown electron donor, via FMN and iron-sulfur (Fe-S) centers, to quinones in the respiratory and/or the photosynthetic chain. The immediate electron acceptor for the enzyme in this species is believed to be plastoquinone. Couples the redox reaction to proton translocation, and thus conserves the redox energy in a proton gradient. The chain is NAD(P)H-quinone oxidoreductase subunit 1 from Acaryochloris marina (strain MBIC 11017).